Consider the following 281-residue polypeptide: LIM domain-containing protein G (281 aa).

LIM zinc-binding domains are found at residues 40-101 (LNCS…IKFN), 141-205 (DICT…SKQV), and 206-262 (NCFA…FTQP).

This chain is LIM domain-containing protein G (limG), found in Dictyostelium discoideum (Social amoeba).